The chain runs to 986 residues: Translation initiation factor IF-2 (986 aa).

Residues 95 to 394 (TFVRRDETSA…GRGKHQDQNT (300 aa)) form a disordered region. The span at 122-182 (ELQRREEEAR…EEEAAKKRAA (61 aa)) shows a compositional bias: basic and acidic residues. Over residues 183–222 (AEAAAREQAQAAKPAQAAQPAAAKAEPVAAKAAEPAVAKQ) the composition is skewed to low complexity. A compositionally biased stretch (basic and acidic residues) spans 228 to 277 (ERAAAERAAQREAAKKAEDAARQAAEKARAEQEQIAKRRAAAEAEARAIR). Over residues 320–342 (APSRPAAKKPAAAAPAATTTPSA) the composition is skewed to low complexity. Residues 371 to 384 (TSGGVDRGWRGGPK) show a composition bias toward gly residues. Positions 486–655 (PRPPVVTVMG…LLQAEVLELK (170 aa)) constitute a tr-type G domain. The G1 stretch occupies residues 495–502 (GHVDHGKT). A GTP-binding site is contributed by 495 to 502 (GHVDHGKT). Residues 520-524 (GITQH) are G2. The tract at residues 541-544 (DTPG) is G3. Residues 541 to 545 (DTPGH) and 595 to 598 (NKID) contribute to the GTP site. Residues 595-598 (NKID) are G4. The tract at residues 631 to 633 (SAK) is G5.

This sequence belongs to the TRAFAC class translation factor GTPase superfamily. Classic translation factor GTPase family. IF-2 subfamily.

Its subcellular location is the cytoplasm. Functionally, one of the essential components for the initiation of protein synthesis. Protects formylmethionyl-tRNA from spontaneous hydrolysis and promotes its binding to the 30S ribosomal subunits. Also involved in the hydrolysis of GTP during the formation of the 70S ribosomal complex. This Paraburkholderia phytofirmans (strain DSM 17436 / LMG 22146 / PsJN) (Burkholderia phytofirmans) protein is Translation initiation factor IF-2.